The sequence spans 124 residues: Phycocyanin PC645 alpha-3 subunit (124 aa).

Arginine 71 provides a ligand contact to (2R,3E)-phycocyanobilin. Mesobiliverdin is bound by residues cysteine 73, tyrosine 81, and lysine 97.

Belongs to the phycoerythrin family. As to quaternary structure, heterotetramer of 2 different alpha chains and 2 identical beta chains which form 2 alpha-beta heterodimers within the heterotetramer. Post-translationally, contains one phycocyanobilin chromophore and one mesobiliverdin chromophore with binding mediated by both the alpha and beta subunits.

It is found in the plastid. The protein localises to the chloroplast thylakoid membrane. Its function is as follows. Light-harvesting photosynthetic tetrapyrrole chromophore-protein from the phycobiliprotein complex. This is Phycocyanin PC645 alpha-3 subunit from Chroomonas sp. (strain CCMP270).